The sequence spans 444 residues: Exodeoxyribonuclease 7 large subunit (444 aa).

This sequence belongs to the XseA family. Heterooligomer composed of large and small subunits.

It is found in the cytoplasm. The enzyme catalyses Exonucleolytic cleavage in either 5'- to 3'- or 3'- to 5'-direction to yield nucleoside 5'-phosphates.. Functionally, bidirectionally degrades single-stranded DNA into large acid-insoluble oligonucleotides, which are then degraded further into small acid-soluble oligonucleotides. The chain is Exodeoxyribonuclease 7 large subunit from Xylella fastidiosa (strain 9a5c).